Here is a 228-residue protein sequence, read N- to C-terminus: Ribonuclease 3 (228 aa).

The region spanning 3–132 is the RNase III domain; that stretch reads IRPLEEHLGI…FLGALYLDQG (130 aa). Glu45 provides a ligand contact to Mg(2+). The active site involves Asp49. 2 residues coordinate Mg(2+): Asp118 and Glu121. The active site involves Glu121. The 70-residue stretch at 158–227 folds into the DRBM domain; the sequence is DYKSQLQEFV…AKNALDSINN (70 aa). The segment at 205–228 is disordered; it reads GTGRTKKEAEQRAAKNALDSINNS.

It belongs to the ribonuclease III family. Homodimer. It depends on Mg(2+) as a cofactor.

It localises to the cytoplasm. It catalyses the reaction Endonucleolytic cleavage to 5'-phosphomonoester.. Digests double-stranded RNA. Involved in the processing of primary rRNA transcript to yield the immediate precursors to the large and small rRNAs (23S and 16S). Processes some mRNAs, and tRNAs when they are encoded in the rRNA operon. Processes pre-crRNA and tracrRNA of type II CRISPR loci if present in the organism. This chain is Ribonuclease 3, found in Oceanobacillus iheyensis (strain DSM 14371 / CIP 107618 / JCM 11309 / KCTC 3954 / HTE831).